The chain runs to 1240 residues: Pectate lyase L (1240 aa).

Residues Met1–Ala26 form the signal peptide. 2 has catalytic activity regions span residues Glu27–Arg551 and Thr545–Lys1240. Residues Asp325, Glu349, Asp350, Asp1049, Asp1073, Asp1074, and Asp1077 each coordinate Ca(2+). The active-site Proton acceptor is Lys1117.

Belongs to the polysaccharide lyase 9 family. Ca(2+) is required as a cofactor.

The protein localises to the secreted. It carries out the reaction Eliminative cleavage of (1-&gt;4)-alpha-D-galacturonan to give oligosaccharides with 4-deoxy-alpha-D-galact-4-enuronosyl groups at their non-reducing ends.. With respect to regulation, inhibited by the metal chelator ethylenediaminetetraacetic acid (EDTA). Functionally, cleaves polygalacturonate or partially methylated pectin. When assayed on polygalacturonate or on pectin, it releases monogalacturonate as the principal product. This Thermoclostridium stercorarium (Clostridium stercorarium) protein is Pectate lyase L.